A 365-amino-acid polypeptide reads, in one-letter code: Cobalt-precorrin-5B C(1)-methyltransferase (365 aa).

It belongs to the CbiD family.

The catalysed reaction is Co-precorrin-5B + S-adenosyl-L-methionine = Co-precorrin-6A + S-adenosyl-L-homocysteine. It participates in cofactor biosynthesis; adenosylcobalamin biosynthesis; cob(II)yrinate a,c-diamide from sirohydrochlorin (anaerobic route): step 6/10. Catalyzes the methylation of C-1 in cobalt-precorrin-5B to form cobalt-precorrin-6A. This is Cobalt-precorrin-5B C(1)-methyltransferase from Paraburkholderia phytofirmans (strain DSM 17436 / LMG 22146 / PsJN) (Burkholderia phytofirmans).